The sequence spans 226 residues: CASP-like protein 2BC1 (226 aa).

Residues Met1 to Glu37 are Cytoplasmic-facing. The helical transmembrane segment at Val38 to Ala58 threads the bilayer. Over Ser59–Lys78 the chain is Extracellular. Residues Thr79–Leu99 form a helical membrane-spanning segment. Residues Arg100–Lys114 lie on the Cytoplasmic side of the membrane. The chain crosses the membrane as a helical span at residues Ala115 to Ala135. Topologically, residues Ala136–Ala170 are extracellular. Residues Gly171–Phe191 form a helical membrane-spanning segment. At His192–Ile226 the chain is on the cytoplasmic side.

It belongs to the Casparian strip membrane proteins (CASP) family. In terms of assembly, homodimer and heterodimers.

The protein resides in the cell membrane. The protein is CASP-like protein 2BC1 of Picea sitchensis (Sitka spruce).